Consider the following 534-residue polypeptide: NAD(P)H-quinone oxidoreductase chain 4 2 (534 aa).

The next 13 membrane-spanning stretches (helical) occupy residues 6–26 (FPWLTTIILLPIVAALFIPLL), 38–58 (WYSLIVGLVDFILLVVAFWTS), 93–113 (LILLTGFISTLAMLAAWPVTF), 117–137 (FFYFLMLAMYGGQILVFAVQD), 138–158 (LLVFFFAWELELIPVYLLLAI), 171–191 (FILYTAGSSLFILVASLAMAF), 210–230 (IGFQLLLYAGFLIAYGVKLPI), 245–265 (TAPVHMLLAGILLKMGGYALF), 279–299 (FAPILVLLGVVNILYAALTSF), 313–333 (ISHMGFVLIGLGSFTQLGLSG), 335–355 (MLQMVSHGLIGASLFFLVGAT), 377–399 (MFAMWTTCAMASLALPGMSGFVA), and 419–439 (VVVISLAAIGVILTPIYLLSM).

Belongs to the complex I subunit 4 family.

Its subcellular location is the cellular thylakoid membrane. The enzyme catalyses a plastoquinone + NADH + (n+1) H(+)(in) = a plastoquinol + NAD(+) + n H(+)(out). It carries out the reaction a plastoquinone + NADPH + (n+1) H(+)(in) = a plastoquinol + NADP(+) + n H(+)(out). Its function is as follows. NDH-1 shuttles electrons from NAD(P)H, via FMN and iron-sulfur (Fe-S) centers, to quinones in the respiratory chain. The immediate electron acceptor for the enzyme in this species is believed to be plastoquinone. Couples the redox reaction to proton translocation (for every two electrons transferred, four hydrogen ions are translocated across the cytoplasmic membrane), and thus conserves the redox energy in a proton gradient. The polypeptide is NAD(P)H-quinone oxidoreductase chain 4 2 (Synechococcus elongatus (strain ATCC 33912 / PCC 7942 / FACHB-805) (Anacystis nidulans R2)).